We begin with the raw amino-acid sequence, 168 residues long: Putative F-box protein At1g30945 (168 aa).

An F-box domain is found at Lys-5–Phe-52.

The sequence is that of Putative F-box protein At1g30945 from Arabidopsis thaliana (Mouse-ear cress).